We begin with the raw amino-acid sequence, 387 residues long: MEQVVIVDAIRTPMGRSKGGAFRNVRAEDLSAHLMRSLLARNPALEAAALDDIYWGCVQQTLEQGFNIARNAALLAEVPHSVPAVTVNRLCGSSMQALHDAARMIMTGDAQACLVGGVEHIGHVPMSHGVDFHPGLSRNVAKAAGMMGLTAEMLARMHGISREMQDAFAARSHARAWAATQSAAFKNEIIPTGGHDADGVLKQFNYDEVIRPETTVEALATLRPAFDPVNGTVTAGTSSALSDGAAAMLVMSESRAHELGLKPRARVRSMAVVGCDPSIMGYGPVPASKLALKKAGLSASDIGVFEMNEAFAAQILPCIKDLGLMEQIDEKINLNGGAIALGHPLGCSGARISTTLLNLMERKDVQFGLATMCIGLGQGIATVFERV.

Cysteine 91 serves as the catalytic Acyl-thioester intermediate. Residues histidine 343 and cysteine 373 each act as proton acceptor in the active site.

This sequence belongs to the thiolase-like superfamily. Thiolase family. As to quaternary structure, heterotetramer of two alpha chains (FadB) and two beta chains (FadA).

The protein localises to the cytoplasm. The enzyme catalyses an acyl-CoA + acetyl-CoA = a 3-oxoacyl-CoA + CoA. The protein operates within lipid metabolism; fatty acid beta-oxidation. Catalyzes the final step of fatty acid oxidation in which acetyl-CoA is released and the CoA ester of a fatty acid two carbons shorter is formed. This is 3-ketoacyl-CoA thiolase from Shigella flexneri serotype 5b (strain 8401).